The primary structure comprises 426 residues: Glutamate-1-semialdehyde 2,1-aminomutase (426 aa).

Lys-265 is modified (N6-(pyridoxal phosphate)lysine).

This sequence belongs to the class-III pyridoxal-phosphate-dependent aminotransferase family. HemL subfamily. As to quaternary structure, homodimer. Requires pyridoxal 5'-phosphate as cofactor.

Its subcellular location is the cytoplasm. It catalyses the reaction (S)-4-amino-5-oxopentanoate = 5-aminolevulinate. It functions in the pathway porphyrin-containing compound metabolism; protoporphyrin-IX biosynthesis; 5-aminolevulinate from L-glutamyl-tRNA(Glu): step 2/2. The protein is Glutamate-1-semialdehyde 2,1-aminomutase of Methylococcus capsulatus (strain ATCC 33009 / NCIMB 11132 / Bath).